The sequence spans 177 residues: Large ribosomal subunit protein uL6 (177 aa).

The protein belongs to the universal ribosomal protein uL6 family. As to quaternary structure, part of the 50S ribosomal subunit.

In terms of biological role, this protein binds to the 23S rRNA, and is important in its secondary structure. It is located near the subunit interface in the base of the L7/L12 stalk, and near the tRNA binding site of the peptidyltransferase center. This is Large ribosomal subunit protein uL6 from Methylobacterium nodulans (strain LMG 21967 / CNCM I-2342 / ORS 2060).